A 198-amino-acid polypeptide reads, in one-letter code: Ribosome maturation factor RimP (198 aa).

It belongs to the RimP family.

It is found in the cytoplasm. Functionally, required for maturation of 30S ribosomal subunits. The chain is Ribosome maturation factor RimP from Rhizobium etli (strain CIAT 652).